The following is a 284-amino-acid chain: Nucleotide-binding protein CPS_4546 (284 aa).

8-15 (GRSGSGKS) lines the ATP pocket. 56-59 (DVRN) serves as a coordination point for GTP.

This sequence belongs to the RapZ-like family.

Its function is as follows. Displays ATPase and GTPase activities. This chain is Nucleotide-binding protein CPS_4546, found in Colwellia psychrerythraea (strain 34H / ATCC BAA-681) (Vibrio psychroerythus).